Consider the following 187-residue polypeptide: Putative acyl-coenzyme A oxidase At3g06690 (187 aa).

The interval 1–21 (MTKEPIYSPRMLHRDPDSPRP) is disordered.

This sequence belongs to the acyl-CoA oxidase family.

It catalyses the reaction a 2,3-saturated acyl-CoA + O2 = a (2E)-enoyl-CoA + H2O2. The protein is Putative acyl-coenzyme A oxidase At3g06690 of Arabidopsis thaliana (Mouse-ear cress).